A 374-amino-acid chain; its full sequence is uncharacterized protein (374 aa).

This sequence belongs to the mimivirus L41 family.

This is an uncharacterized protein from Acanthamoeba polyphaga (Amoeba).